Reading from the N-terminus, the 4481-residue chain is Dynein axonemal heavy chain 17 (4481 aa).

The stem stretch occupies residues 1–1792 (MPDLRIDYLE…FANICDAQIK (1792 aa)). Residues 521 to 569 (LLYMCGGLLERPLILVEVVPRYSVMLEMFNTELDNAKLMYDAQMAASAD) form a Kelch 1 repeat. The stretch at 759–826 (ENVMEYIQEM…GRVANLNKRY (68 aa)) forms a coiled coil. 2 TPR repeats span residues 1533-1566 (VVEATNKPDLYNKLENLKMSLAVCEKALAEYLET) and 1688-1722 (IWWTTEVGLAFARLEEGYENAIKDYNKKQISQLNA). 4 AAA regions span residues 1793–2014 (YSYE…VLVV), 2074–2295 (KIIK…IGFK), 2401–2649 (ELDP…IFQG), and 2747–2996 (SYNE…ERRY). ATP is bound by residues 1831–1838 (GPAGTGKT) and 2112–2119 (GNAGSGKS). The Kelch 2 repeat unit spans residues 2229–2275 (ISHLRTATPATVSRAGILYINPADLGWNPVVSSWIERRKVQSEKANL). ATP-binding positions include 2439 to 2446 (GNAGTGKS) and 2785 to 2792 (GVGGSGKQ). One copy of the Kelch 3 repeat lies at 2782-2834 (LLVGVGGSGKQSLSRLAAYISALDVFQITLKKGYAIPDLKMDLATQYIKSAVK). Coiled coils occupy residues 3011–3071 (YQNL…IQVV) and 3241–3293 (DVAP…EKIK). Residues 3011 to 3297 (YQNLLAKKRM…TAEKIKCQQE (287 aa)) are stalk. AAA regions lie at residues 3389–3616 (LTDD…EIEE) and 3826–4059 (VKNF…VLYN). Residues 4138–4173 (PESPYLYGLHPNAEIGFLTVTSEKLFRTVLEMQPKE) form a TPR 3 repeat. Kelch repeat units follow at residues 4272–4321 (NLGL…DLLQ) and 4339–4385 (VWLA…DMTA).

It belongs to the dynein heavy chain family. As to quaternary structure, consists of at least two heavy chains and a number of intermediate and light chains.

Its subcellular location is the cytoplasm. It is found in the cytoskeleton. The protein localises to the flagellum axoneme. Force generating protein component of the outer dynein arms (ODAs) in the sperm flagellum. Produces force towards the minus ends of microtubules. Dynein has ATPase activity; the force-producing power stroke is thought to occur on release of ADP. Plays a major role in sperm motility, implicated in sperm flagellar assembly and beating. This chain is Dynein axonemal heavy chain 17, found in Mus musculus (Mouse).